Here is a 509-residue protein sequence, read N- to C-terminus: Glutamyl-tRNA(Gln) amidotransferase subunit B, mitochondrial (509 aa).

It belongs to the GatB/GatE family. GatB subfamily. As to quaternary structure, subunit of the heterotrimeric GatFAB amidotransferase (AdT) complex, composed of A, B and F subunits.

The protein localises to the mitochondrion. The catalysed reaction is L-glutamyl-tRNA(Gln) + L-glutamine + ATP + H2O = L-glutaminyl-tRNA(Gln) + L-glutamate + ADP + phosphate + H(+). In terms of biological role, allows the formation of correctly charged Gln-tRNA(Gln) through the transamidation of misacylated Glu-tRNA(Gln) in the mitochondria. The reaction takes place in the presence of glutamine and ATP through an activated gamma-phospho-Glu-tRNA(Gln). The protein is Glutamyl-tRNA(Gln) amidotransferase subunit B, mitochondrial of Candida dubliniensis (strain CD36 / ATCC MYA-646 / CBS 7987 / NCPF 3949 / NRRL Y-17841) (Yeast).